Consider the following 383-residue polypeptide: uncharacterized protein (383 aa).

It belongs to the peptidase M20 family.

This is an uncharacterized protein from Staphylococcus aureus (strain USA300).